The following is a 495-amino-acid chain: tRNA-guanine(15) transglycosylase (495 aa).

The Nucleophile role is filled by Asp-83. Asp-118 provides a ligand contact to substrate. Residues Cys-273 and Cys-278 each coordinate Zn(2+).

This sequence belongs to the archaeosine tRNA-ribosyltransferase family. Zn(2+) serves as cofactor.

It catalyses the reaction guanosine(15) in tRNA + 7-cyano-7-deazaguanine = 7-cyano-7-carbaguanosine(15) in tRNA + guanine. The protein operates within tRNA modification; archaeosine-tRNA biosynthesis. Functionally, exchanges the guanine residue with 7-cyano-7-deazaguanine (preQ0) at position 15 in the dihydrouridine loop (D-loop) of archaeal tRNAs. The sequence is that of tRNA-guanine(15) transglycosylase from Pyrobaculum aerophilum (strain ATCC 51768 / DSM 7523 / JCM 9630 / CIP 104966 / NBRC 100827 / IM2).